We begin with the raw amino-acid sequence, 95 residues long: Co-chaperonin GroES (95 aa).

Belongs to the GroES chaperonin family. As to quaternary structure, heptamer of 7 subunits arranged in a ring. Interacts with the chaperonin GroEL.

The protein resides in the cytoplasm. Its function is as follows. Together with the chaperonin GroEL, plays an essential role in assisting protein folding. The GroEL-GroES system forms a nano-cage that allows encapsulation of the non-native substrate proteins and provides a physical environment optimized to promote and accelerate protein folding. GroES binds to the apical surface of the GroEL ring, thereby capping the opening of the GroEL channel. The polypeptide is Co-chaperonin GroES (Ruthia magnifica subsp. Calyptogena magnifica).